The primary structure comprises 322 residues: Undecaprenyl-phosphate 4-deoxy-4-formamido-L-arabinose transferase (322 aa).

Residues 1-235 (MFEIHPVKKV…TCLTTTPLRM (235 aa)) lie on the Cytoplasmic side of the membrane. A helical membrane pass occupies residues 236-256 (LSLLGSIIAIGGFSIAVLLVI). Over 257–269 (LRLTFGPQWAAEG) the chain is Periplasmic. The helical transmembrane segment at 270–290 (VFMLFAVLFTFIGAQFIGMGL) threads the bilayer. Residues 291 to 322 (LGEYIGRIYTDVRARPRYFVQQVIRPSSKENE) lie on the Cytoplasmic side of the membrane.

It belongs to the glycosyltransferase 2 family.

It localises to the cell inner membrane. It catalyses the reaction UDP-4-deoxy-4-formamido-beta-L-arabinose + di-trans,octa-cis-undecaprenyl phosphate = 4-deoxy-4-formamido-alpha-L-arabinopyranosyl di-trans,octa-cis-undecaprenyl phosphate + UDP. It functions in the pathway glycolipid biosynthesis; 4-amino-4-deoxy-alpha-L-arabinose undecaprenyl phosphate biosynthesis; 4-amino-4-deoxy-alpha-L-arabinose undecaprenyl phosphate from UDP-4-deoxy-4-formamido-beta-L-arabinose and undecaprenyl phosphate: step 1/2. Its pathway is bacterial outer membrane biogenesis; lipopolysaccharide biosynthesis. In terms of biological role, catalyzes the transfer of 4-deoxy-4-formamido-L-arabinose from UDP to undecaprenyl phosphate. The modified arabinose is attached to lipid A and is required for resistance to polymyxin and cationic antimicrobial peptides. The chain is Undecaprenyl-phosphate 4-deoxy-4-formamido-L-arabinose transferase from Shigella dysenteriae serotype 1 (strain Sd197).